A 325-amino-acid chain; its full sequence is MIEVQQLCKVYGEGQPAALDRVSLTVPDRAVYGILGRSGAGKSTLLRCLNLLERPSSGRILMDGQDLGALSASELRRQRQGIGMIFQGFNLLHSRTVEDNVAVPLEIAGLGKSQRRARVLELLELVGLGDKAQAYPSQLSGGQKQRVGIARALAAGPRYLLSDEATSALDPETTASILQLLAQINRELGLTIVLITHELEVVKAICSHAASLAGGRLMESGAVAELLGNPQSALGRALLPGYNLPFNGSQPQAELTFFDNQRAAPLLEQLSRQQALELKVLAGGVEAVGGRRVGRLRIAAAPADAGKFQQLLTALAQRGIRSERL.

The 238-residue stretch at 2 to 239 (IEVQQLCKVY…PQSALGRALL (238 aa)) folds into the ABC transporter domain. Position 36 to 43 (36 to 43 (GRSGAGKS)) interacts with ATP.

Belongs to the ABC transporter superfamily. Methionine importer (TC 3.A.1.24) family. As to quaternary structure, the complex is composed of two ATP-binding proteins (MetN), two transmembrane proteins (MetI) and a solute-binding protein (MetQ).

It is found in the cell inner membrane. It carries out the reaction L-methionine(out) + ATP + H2O = L-methionine(in) + ADP + phosphate + H(+). The enzyme catalyses D-methionine(out) + ATP + H2O = D-methionine(in) + ADP + phosphate + H(+). Functionally, part of the ABC transporter complex MetNIQ involved in methionine import. Responsible for energy coupling to the transport system. This is Methionine import ATP-binding protein MetN 3 from Pseudomonas fluorescens (strain ATCC BAA-477 / NRRL B-23932 / Pf-5).